The primary structure comprises 640 residues: tRNA-dihydrouridine(47) synthase [NAD(P)(+)]-like (640 aa).

Low complexity predominate over residues 1–10 (MAEVAEVAAE). Disordered stretches follow at residues 1–22 (MAEV…VGAC) and 47–106 (DKQE…PHMK). Alanine 2 is modified (N-acetylalanine). The segment covering 64 to 91 (PEAKRIRLEDGQENGKTEVAVESHERQV) has biased composition (basic and acidic residues). Over residues 92-106 (PKRARGQNKSRPHMK) the composition is skewed to basic residues. 2 consecutive C3H1-type zinc fingers follow at residues 110–140 (YDKE…HDVG) and 148–178 (ADLG…HLGP). Residue serine 267 is modified to Phosphoserine. Residues 301–303 (PLT) and glutamine 355 contribute to the FMN site. Cysteine 386 acts as the Proton donor in catalysis. Lysine 406 participates in a covalent cross-link: Glycyl lysine isopeptide (Lys-Gly) (interchain with G-Cter in SUMO2). FMN-binding positions include lysine 425, histidine 455, 487–489 (NGD), and 510–511 (AR).

This sequence belongs to the Dus family. Dus3 subfamily. It depends on FMN as a cofactor.

The enzyme catalyses 5,6-dihydrouridine(47) in tRNA + NAD(+) = uridine(47) in tRNA + NADH + H(+). It catalyses the reaction 5,6-dihydrouridine(47) in tRNA + NADP(+) = uridine(47) in tRNA + NADPH + H(+). It carries out the reaction a 5,6-dihydrouridine in mRNA + NAD(+) = a uridine in mRNA + NADH + H(+). The catalysed reaction is a 5,6-dihydrouridine in mRNA + NADP(+) = a uridine in mRNA + NADPH + H(+). In terms of biological role, catalyzes the synthesis of dihydrouridine, a modified base, in various RNAs, such as tRNAs, mRNAs and some long non-coding RNAs (lncRNAs). Mainly modifies the uridine in position 47 (U47) in the D-loop of most cytoplasmic tRNAs. Also able to mediate the formation of dihydrouridine in some mRNAs, thereby regulating their translation. This is tRNA-dihydrouridine(47) synthase [NAD(P)(+)]-like from Rattus norvegicus (Rat).